A 570-amino-acid polypeptide reads, in one-letter code: NADPH oxidase 2 (570 aa).

Residues 2–9 (GNWVVNEG) lie on the Cytoplasmic side of the membrane. The chain crosses the membrane as a helical span at residues 10-36 (ISIFVILVWLGMNVFLFVWYYRVYDIP). Over 37-46 (DKFFYTRKLL) the chain is Extracellular. The helical transmembrane segment at 47 to 72 (GSALALARAPAACLNFNCMLILLPVC) threads the bilayer. Positions 54–286 (RAPAACLNFN…MFLYLCERLV (233 aa)) constitute a Ferric oxidoreductase domain. The Cytoplasmic segment spans residues 73 to 95 (RNLLSFLRGSSACCSTRIRRQLD). Residues 96–130 (RNLTFHKMVAWMIALHTAIHTIAHLFNVEWCVNAR) form a helical membrane-spanning segment. His101 and His115 together coordinate heme b. Residues 131 to 163 (VNNSDPYSIALSDIGDKPNETYLNFVRQRIKNP) are Extracellular-facing. N-linked (GlcNAc...) asparagine glycans are attached at residues Asn132 and Asn149. Residue Lys161 forms a Glycyl lysine isopeptide (Lys-Gly) (interchain with G-Cter in ubiquitin) linkage. Residues 164–194 (EGGLYVAVTRLAGITGVVITLCLILIITSST) traverse the membrane as a helical segment. Residues 195 to 203 (KTIRRSYFE) lie on the Cytoplasmic side of the membrane. Arg199 and Ser200 together coordinate FAD. The chain crosses the membrane as a helical span at residues 204 to 222 (VFWYTHHLFVIFFIGLAIH). 5 residues coordinate heme b: Trp206, His209, His222, Arg226, and Ile227. The Extracellular segment spans residues 223–267 (GAQRIVRGQTAESLLKHQPRNCYQNISQWGKIENCPIPEFSGNPP). The N-linked (GlcNAc...) asparagine glycan is linked to Asn247. Heme b-binding residues include Met268, Tyr280, and Arg287. The helical transmembrane segment at 268-285 (MTWKWIVGPMFLYLCERL) threads the bilayer. The Cytoplasmic segment spans residues 286–570 (VRFWRSQQKV…VHFIFNKENF (285 aa)). The 111-residue stretch at 287–397 (RFWRSQQKVV…DGPFGTASED (111 aa)) folds into the FAD-binding FR-type domain. Glycyl lysine isopeptide (Lys-Gly) (interchain with G-Cter in ubiquitin) cross-links involve residues Lys294, Lys299, Lys306, Lys328, and Lys334. FAD-binding residues include Trp337, His338, Pro339, Thr341, His354, Arg356, Trp361, and Thr362. Residue Lys381 forms a Glycyl lysine isopeptide (Lys-Gly) (interchain with G-Cter in ubiquitin) linkage. The NADPH site is built by Ile411, Arg446, and Thr481. Lys506 participates in a covalent cross-link: Glycyl lysine isopeptide (Lys-Gly) (interchain with G-Cter in ubiquitin). Arg513 contributes to the NADPH binding site. Lys567 participates in a covalent cross-link: Glycyl lysine isopeptide (Lys-Gly) (interchain with G-Cter in ubiquitin).

Component of the phagocyte NADPH oxidase core complex/cytochrome b558 complex, composed of CYBB (heavy chain (beta)) and CYBA (light chain (alpha)). Component of the phagocyte NADPH oxidase complex composed of an obligatory core heterodimer formed by the membrane proteins CYBA and CYBB and the cytosolic regulatory subunits NCF1/p47-phox, NCF2/p67-phox, NCF4/p40-phox and the small GTPase RAC1 or RAC2. Interacts with NCF1 (phosphorylated form). Interacts with NCF2; the interaction is enhanced in the presence of GBP7. Interacts with RAC2. Interacts with RAC1. Interacts with calprotectin (S100A8/9). Interacts with NRROS; the interaction is direct and impairs formation of a stable NADPH oxidase complex. Interacts with CYBC1; CYBC1 may act as a chaperone stabilizing Cytochrome b-245 heterodimer. The CYBA-CYBB complex interacts with GBP7. FAD is required as a cofactor. Glycosylated. In terms of processing, phosphorylated on Ser and Thr residues by PKC during neutrophils activation. Phosphorylation enhances the NADPH oxidase activity and stimulates its interaction with RAC2, NCF2/p67-phox, and NCF1/p47-phox. Post-translationally, undergoes 'Lys-48'-linked polyubiquitination, likely by RNF145, triggering endoplasmic reticulum-associated degradation.

The protein resides in the cell membrane. The enzyme catalyses NADPH + 2 O2 = 2 superoxide + NADP(+) + H(+). Its function is as follows. Catalytic subunit of the phagocyte NADPH oxidase complex that mediates the transfer of electrons from cytosolic NADPH to O2 to produce the superoxide anion (O2(-)). In the activated complex, electrons are first transferred from NADPH to flavin adenine dinucleotide (FAD) and subsequently transferred via two heme molecules to molecular oxygen, producing superoxide through an outer-sphere reaction. Activation of the NADPH oxidase complex is initiated by the assembly of cytosolic subunits of the NADPH oxidase complex with the core NADPH oxidase complex to form a complex at the plasma membrane or phagosomal membrane. This activation process is initiated by phosphorylation dependent binding of the cytosolic NCF1/p47-phox subunit to the C-terminus of CYBA/p22-phox. NADPH oxidase complex assembly is impaired through interaction with NRROS. This Bos taurus (Bovine) protein is NADPH oxidase 2.